Here is a 345-residue protein sequence, read N- to C-terminus: Polyprenyl transferase dpmpC (345 aa).

The next 8 helical transmembrane spans lie at 24-44 (PVFA…ARLA), 60-80 (GLCF…NDWV), 101-121 (VTTF…WYLL), 183-203 (LYVY…VIGW), 220-240 (CLPL…AYSY), 261-281 (HLHL…LLFL), 286-306 (SFWL…EQLI), and 319-339 (LHKS…VELL).

The protein belongs to the UbiA prenyltransferase family. It depends on Mg(2+) as a cofactor.

Its subcellular location is the membrane. Its pathway is secondary metabolite biosynthesis; terpenoid biosynthesis. Its function is as follows. Polyprenyl transferase; part of the gene cluster that mediates the biosynthesis of diterpenoid pyrones. The first step of the pathway is the synthesis of the alpha-pyrone moiety by the polyketide synthase dpmpA via condensation of one acetyl-CoA starter unit with 3 malonyl-CoA units and 2 methylations. The alpha-pyrone is then combined with geranylgeranyl pyrophosphate (GGPP) formed by the GGPP synthase dpmpD through the action of the prenyltransferase dpmpC to yield a linear alpha-pyrone diterpenoid. Subsequent steps in the diterpenoid pyrone biosynthetic pathway involve the decalin core formation, which is initiated by the epoxidation of the C10-C11 olefin by the FAD-dependent oxidoreductase dpmpE, and is followed by a cyclization cascade catalyzed by the terpene cyclase dpmpB. The short chain dehydrogenase/reductase dpmpG then oxidizes the 8S hydroxy group to a ketone and the short chain dehydrogenase/reductase dpmpH reduces the ketone to the 8R hydroxy group to yield higginsianin B. Higginsianin B is further methylated by the methyltransferase dpmpI to produce the intermediate named FDDP B. The cytochrome P450 monooxygenase dpmpJ then oxidizes the C-26 methyl to primary alcohol, producing the final diterpenoid pyrone with a C-26 primary alcohol on the gamma-pyrone moiety named FDDP C. In Macrophomina phaseolina (strain MS6) (Charcoal rot fungus), this protein is Polyprenyl transferase dpmpC.